Reading from the N-terminus, the 489-residue chain is N-succinylglutamate 5-semialdehyde dehydrogenase 1 (489 aa).

223 to 228 (GSSRTG) contacts NAD(+). Catalysis depends on residues glutamate 246 and cysteine 280.

The protein belongs to the aldehyde dehydrogenase family. AstD subfamily.

It catalyses the reaction N-succinyl-L-glutamate 5-semialdehyde + NAD(+) + H2O = N-succinyl-L-glutamate + NADH + 2 H(+). The protein operates within amino-acid degradation; L-arginine degradation via AST pathway; L-glutamate and succinate from L-arginine: step 4/5. Functionally, catalyzes the NAD-dependent reduction of succinylglutamate semialdehyde into succinylglutamate. In Pseudoalteromonas translucida (strain TAC 125), this protein is N-succinylglutamate 5-semialdehyde dehydrogenase 1.